The primary structure comprises 888 residues: Alanine--tRNA ligase (888 aa).

His570, His574, Cys673, and His677 together coordinate Zn(2+).

This sequence belongs to the class-II aminoacyl-tRNA synthetase family. Zn(2+) serves as cofactor.

The protein localises to the cytoplasm. It catalyses the reaction tRNA(Ala) + L-alanine + ATP = L-alanyl-tRNA(Ala) + AMP + diphosphate. Functionally, catalyzes the attachment of alanine to tRNA(Ala) in a two-step reaction: alanine is first activated by ATP to form Ala-AMP and then transferred to the acceptor end of tRNA(Ala). Also edits incorrectly charged Ser-tRNA(Ala) and Gly-tRNA(Ala) via its editing domain. The sequence is that of Alanine--tRNA ligase from Chlorobium phaeobacteroides (strain DSM 266 / SMG 266 / 2430).